The sequence spans 405 residues: Acetylornithine/succinyldiaminopimelate aminotransferase (405 aa).

Pyridoxal 5'-phosphate is bound by residues 108 to 109 (GT) and phenylalanine 141. Arginine 144 is a N(2)-acetyl-L-ornithine binding site. Residue 226-229 (DEVQ) coordinates pyridoxal 5'-phosphate. Position 255 is an N6-(pyridoxal phosphate)lysine (lysine 255). Residue serine 283 participates in N(2)-acetyl-L-ornithine binding. Threonine 284 is a binding site for pyridoxal 5'-phosphate.

Belongs to the class-III pyridoxal-phosphate-dependent aminotransferase family. ArgD subfamily. In terms of assembly, homodimer. Pyridoxal 5'-phosphate serves as cofactor.

It localises to the cytoplasm. The enzyme catalyses N(2)-acetyl-L-ornithine + 2-oxoglutarate = N-acetyl-L-glutamate 5-semialdehyde + L-glutamate. It carries out the reaction N-succinyl-(2S,6S)-2,6-diaminopimelate + 2-oxoglutarate = (S)-2-succinylamino-6-oxoheptanedioate + L-glutamate. It participates in amino-acid biosynthesis; L-arginine biosynthesis; N(2)-acetyl-L-ornithine from L-glutamate: step 4/4. Its pathway is amino-acid biosynthesis; L-lysine biosynthesis via DAP pathway; LL-2,6-diaminopimelate from (S)-tetrahydrodipicolinate (succinylase route): step 2/3. Its activity is regulated as follows. Inhibited by gabaculine (Gcn). In terms of biological role, involved in both the arginine and lysine biosynthetic pathways. This Salmonella typhimurium (strain LT2 / SGSC1412 / ATCC 700720) protein is Acetylornithine/succinyldiaminopimelate aminotransferase.